Consider the following 40-residue polypeptide: GWIRDFGKRIERVGQHTRDATIQTIAVAQQAANVAATLKG.

Belongs to the cecropin family.

It localises to the secreted. Its function is as follows. Sarcotoxins, which are potent bactericidal proteins, are produced in response to injury. They are cytotoxic to both Gram-positive and Gram-negative bacteria. This chain is Sarcotoxin-1D, found in Sarcophaga peregrina (Flesh fly).